The primary structure comprises 242 residues: Ribonuclease 3 2 (242 aa).

The 126-residue stretch at Leu-12–Ser-137 folds into the RNase III domain. Glu-51 contacts Mg(2+). Asp-55 is a catalytic residue. Mg(2+)-binding residues include Asp-123 and Glu-126. Glu-126 is an active-site residue. A DRBM domain is found at Asn-165–Pro-235.

The protein belongs to the ribonuclease III family. As to quaternary structure, homodimer. Mg(2+) serves as cofactor.

Its subcellular location is the cytoplasm. It catalyses the reaction Endonucleolytic cleavage to 5'-phosphomonoester.. Digests double-stranded RNA. Involved in the processing of primary rRNA transcript to yield the immediate precursors to the large and small rRNAs (23S and 16S). Processes some mRNAs, and tRNAs when they are encoded in the rRNA operon. Processes pre-crRNA and tracrRNA of type II CRISPR loci if present in the organism. The sequence is that of Ribonuclease 3 2 (rnc2) from Nostoc sp. (strain PCC 7120 / SAG 25.82 / UTEX 2576).